The following is a 390-amino-acid chain: Transforming growth factor beta-1 proprotein (390 aa).

Residues 1 to 29 form the signal peptide; that stretch reads MPPSGLRLLPLLLPLLWLLVLTPGRPAAG. The straightjacket domain stretch occupies residues 30 to 74; the sequence is LSTCKTIDMELVKRKRIEAIRGQILSKLRLASPPSQGDVPPGPLP. Positions 75–271 are arm domain; sequence EAVLALYNST…ATPLERAQHL (197 aa). N-linked (GlcNAc...) asparagine glycans are attached at residues Asn82, Asn136, and Asn176. A bowtie tail region spans residues 226 to 252; that stretch reads DSKDNTLHVEINGFNSGRRGDLATIHG. Residues 244-246 carry the Cell attachment site motif; it reads RGD. 4 cysteine pairs are disulfide-bonded: Cys285/Cys294, Cys293/Cys356, Cys322/Cys387, and Cys326/Cys389.

The protein belongs to the TGF-beta family. Homodimer; disulfide-linked. Interacts with the serine proteases, HTRA1 and HTRA3: the interaction with either inhibits TGFB1-mediated signaling and the HTRA protease activity is required for this inhibition. May interact with THSD4; this interaction may lead to sequestration by FBN1 microfibril assembly and attenuation of TGFB signaling. Interacts with CD109, DPT and ASPN. Interacts with EFEMP2. Interacts with TSKU; the interaction contributes to regulation of the hair cycle. Interacts with TGFBR3. In terms of assembly, homodimer; disulfide-linked. Interacts with transforming growth factor beta-1 (TGF-beta-1) chain; interaction is non-covalent and maintains TGF-beta-1 in a latent state; each latency-associated peptide (LAP) monomer interacts with TGF-beta-1 in the other monomer. Interacts with LTBP1; leading to regulation of TGF-beta-1 activation. Interacts with LRRC32/GARP; leading to regulation of TGF-beta-1 activation on the surface of activated regulatory T-cells (Tregs). Interacts with LRRC33/NRROS; leading to regulation of TGF-beta-1 activation in macrophages and microglia. Interacts (via cell attachment site) with integrins ITGAV and ITGB6 (ITGAV:ITGB6), leading to release of the active TGF-beta-1. Interacts with NREP; the interaction results in a decrease in TGFB1 autoinduction. Interacts with HSP90AB1; inhibits latent TGFB1 activation. As to quaternary structure, homodimer; disulfide-linked. Interacts with TGF-beta receptors (TGFBR1 and TGFBR2), leading to signal transduction. Post-translationally, transforming growth factor beta-1 proprotein: The precursor proprotein is cleaved in the Golgi apparatus by FURIN to form Transforming growth factor beta-1 (TGF-beta-1) and Latency-associated peptide (LAP) chains, which remain non-covalently linked, rendering TGF-beta-1 inactive. N-glycosylated. Deglycosylation leads to activation of Transforming growth factor beta-1 (TGF-beta-1); mechanisms triggering deglycosylation-driven activation of TGF-beta-1 are however unclear.

It localises to the secreted. The protein resides in the extracellular space. It is found in the extracellular matrix. Its function is as follows. Transforming growth factor beta-1 proprotein: Precursor of the Latency-associated peptide (LAP) and Transforming growth factor beta-1 (TGF-beta-1) chains, which constitute the regulatory and active subunit of TGF-beta-1, respectively. In terms of biological role, required to maintain the Transforming growth factor beta-1 (TGF-beta-1) chain in a latent state during storage in extracellular matrix. Associates non-covalently with TGF-beta-1 and regulates its activation via interaction with 'milieu molecules', such as LTBP1, LRRC32/GARP and LRRC33/NRROS, that control activation of TGF-beta-1. Interaction with LRRC33/NRROS regulates activation of TGF-beta-1 in macrophages and microglia. Interaction with LRRC32/GARP controls activation of TGF-beta-1 on the surface of activated regulatory T-cells (Tregs). Interaction with integrins (ITGAV:ITGB6 or ITGAV:ITGB8) results in distortion of the Latency-associated peptide chain and subsequent release of the active TGF-beta-1. Functionally, multifunctional protein that regulates the growth and differentiation of various cell types and is involved in various processes, such as normal development, immune function, microglia function and responses to neurodegeneration. Activation into mature form follows different steps: following cleavage of the proprotein in the Golgi apparatus, Latency-associated peptide (LAP) and Transforming growth factor beta-1 (TGF-beta-1) chains remain non-covalently linked rendering TGF-beta-1 inactive during storage in extracellular matrix. At the same time, LAP chain interacts with 'milieu molecules', such as LTBP1, LRRC32/GARP and LRRC33/NRROS that control activation of TGF-beta-1 and maintain it in a latent state during storage in extracellular milieus. TGF-beta-1 is released from LAP by integrins (ITGAV:ITGB6 or ITGAV:ITGB8): integrin-binding to LAP stabilizes an alternative conformation of the LAP bowtie tail and results in distortion of the LAP chain and subsequent release of the active TGF-beta-1. Once activated following release of LAP, TGF-beta-1 acts by binding to TGF-beta receptors (TGFBR1 and TGFBR2), which transduce signal. While expressed by many cells types, TGF-beta-1 only has a very localized range of action within cell environment thanks to fine regulation of its activation by Latency-associated peptide chain (LAP) and 'milieu molecules'. Plays an important role in bone remodeling: acts as a potent stimulator of osteoblastic bone formation, causing chemotaxis, proliferation and differentiation in committed osteoblasts. Can promote either T-helper 17 cells (Th17) or regulatory T-cells (Treg) lineage differentiation in a concentration-dependent manner. At high concentrations, leads to FOXP3-mediated suppression of RORC and down-regulation of IL-17 expression, favoring Treg cell development. At low concentrations in concert with IL-6 and IL-21, leads to expression of the IL-17 and IL-23 receptors, favoring differentiation to Th17 cells. Stimulates sustained production of collagen through the activation of CREB3L1 by regulated intramembrane proteolysis (RIP). Mediates SMAD2/3 activation by inducing its phosphorylation and subsequent translocation to the nucleus. Positively regulates odontoblastic differentiation in dental papilla cells, via promotion of IPO7-mediated translocation of phosphorylated SMAD2 to the nucleus and subsequent transcription of target genes. Can induce epithelial-to-mesenchymal transition (EMT) and cell migration in various cell types. This is Transforming growth factor beta-1 proprotein (TGFB1) from Sus scrofa (Pig).